The primary structure comprises 415 residues: Mitogen-activated protein kinase mpkC (415 aa).

The region spanning 20–299 (YANLQPVGLG…AEQGLMHPWM (280 aa)) is the Protein kinase domain. ATP-binding positions include 26-34 (VGLGTAGVV) and Lys-49. The active-site Proton acceptor is the Asp-141. Phosphothreonine is present on Thr-171. The TXY motif lies at 171 to 173 (TGY). Tyr-173 is subject to Phosphotyrosine.

This sequence belongs to the protein kinase superfamily. Ser/Thr protein kinase family. MAP kinase subfamily. HOG1 sub-subfamily. Requires Mg(2+) as cofactor. Post-translationally, dually phosphorylated on Thr-171 and Tyr-173, which activates the enzyme.

It carries out the reaction L-seryl-[protein] + ATP = O-phospho-L-seryl-[protein] + ADP + H(+). The catalysed reaction is L-threonyl-[protein] + ATP = O-phospho-L-threonyl-[protein] + ADP + H(+). Its activity is regulated as follows. Activated by tyrosine and threonine phosphorylation. Functionally, mitogen-activated protein kinase required for growth on media where sorbitol or mannitol is the sole carbon source. In Emericella nidulans (strain FGSC A4 / ATCC 38163 / CBS 112.46 / NRRL 194 / M139) (Aspergillus nidulans), this protein is Mitogen-activated protein kinase mpkC (mpkC).